A 163-amino-acid chain; its full sequence is Xanthine-guanine phosphoribosyltransferase (163 aa).

5-phospho-alpha-D-ribose 1-diphosphate is bound by residues 43-44 and 95-103; these read RG and DDLVDTGGT. Residue aspartate 96 coordinates Mg(2+). The guanine site is built by aspartate 99 and isoleucine 142. Residues aspartate 99 and isoleucine 142 each contribute to the xanthine site. GMP-binding positions include 99–103 and 141–142; these read DTGGT and WI.

This sequence belongs to the purine/pyrimidine phosphoribosyltransferase family. XGPT subfamily. As to quaternary structure, homotetramer. It depends on Mg(2+) as a cofactor.

It localises to the cell inner membrane. The catalysed reaction is GMP + diphosphate = guanine + 5-phospho-alpha-D-ribose 1-diphosphate. It carries out the reaction XMP + diphosphate = xanthine + 5-phospho-alpha-D-ribose 1-diphosphate. The enzyme catalyses IMP + diphosphate = hypoxanthine + 5-phospho-alpha-D-ribose 1-diphosphate. Its pathway is purine metabolism; GMP biosynthesis via salvage pathway; GMP from guanine: step 1/1. It functions in the pathway purine metabolism; XMP biosynthesis via salvage pathway; XMP from xanthine: step 1/1. In terms of biological role, purine salvage pathway enzyme that catalyzes the transfer of the ribosyl-5-phosphate group from 5-phospho-alpha-D-ribose 1-diphosphate (PRPP) to the N9 position of the 6-oxopurines guanine and xanthine to form the corresponding ribonucleotides GMP (guanosine 5'-monophosphate) and XMP (xanthosine 5'-monophosphate), with the release of PPi. To a lesser extent, also acts on hypoxanthine. This is Xanthine-guanine phosphoribosyltransferase from Nitratidesulfovibrio vulgaris (strain DP4) (Desulfovibrio vulgaris).